A 561-amino-acid chain; its full sequence is Putative transport protein YbjL (561 aa).

Transmembrane regions (helical) follow at residues 8–28 (LLNG…LCLG), 32–52 (LGSI…LLGQ), 66–86 (FMLF…SIFF), 94–114 (MLAL…GKLF), and 158–178 (NLSL…IVGA). RCK C-terminal domains follow at residues 200–288 (RGLD…SFRN) and 292–373 (VFDR…RIGF). Transmembrane regions (helical) follow at residues 383-403 (LLAF…TFQF), 406-426 (FSFG…LGFL), 447-467 (FGLM…ISNG), 475-495 (MLIA…LFGA), and 540-560 (AIAN…WPGL).

Belongs to the AAE transporter (TC 2.A.81) family. YbjL subfamily.

The protein localises to the cell membrane. This chain is Putative transport protein YbjL, found in Salmonella arizonae (strain ATCC BAA-731 / CDC346-86 / RSK2980).